The primary structure comprises 237 residues: Uridylate kinase (237 aa).

Position 10-13 (10-13) interacts with ATP; that stretch reads KLSG. Gly-52 provides a ligand contact to UMP. Gly-53 and Arg-57 together coordinate ATP. Residues Asp-72 and 133–140 each bind UMP; that span reads TGNPFFTT. ATP-binding residues include Thr-160, Tyr-166, and Asp-169.

It belongs to the UMP kinase family. Homohexamer.

The protein localises to the cytoplasm. The enzyme catalyses UMP + ATP = UDP + ADP. It participates in pyrimidine metabolism; CTP biosynthesis via de novo pathway; UDP from UMP (UMPK route): step 1/1. Its activity is regulated as follows. Inhibited by UTP. Catalyzes the reversible phosphorylation of UMP to UDP. This Thiobacillus denitrificans (strain ATCC 25259 / T1) protein is Uridylate kinase.